We begin with the raw amino-acid sequence, 401 residues long: UPF0242 protein CCA_01002 (401 aa).

This sequence belongs to the UPF0242 family.

This Chlamydia caviae (strain ATCC VR-813 / DSM 19441 / 03DC25 / GPIC) (Chlamydophila caviae) protein is UPF0242 protein CCA_01002.